A 133-amino-acid chain; its full sequence is Putative actin-depolymerizing factor 11 (133 aa).

The ADF-H domain maps to 1–133 (MVLHDDCKLT…SLDAIRRRIN (133 aa)).

The protein belongs to the actin-binding proteins ADF family.

The protein resides in the cytoplasm. It localises to the cytoskeleton. Its function is as follows. Actin-depolymerizing protein. Severs actin filaments (F-actin) and binds to actin monomers. The polypeptide is Putative actin-depolymerizing factor 11 (ADF11) (Arabidopsis thaliana (Mouse-ear cress)).